We begin with the raw amino-acid sequence, 354 residues long: Cysteine and histidine-rich domain-containing protein morgana (354 aa).

Positions 4, 9, 23, 26, 41, 42, 58, 63, 140, 145, 159, 162, 177, 178, 194, and 199 each coordinate Zn(2+). 2 consecutive CHORD domains span residues 4–63 (CYNR…LAKH) and 140–199 (CKNN…YGEH). In terms of domain architecture, CS spans 210-301 (VVQCRYDWHQ…LEPGSWSNLN (92 aa)). Phosphoserine occurs at positions 324 and 339.

Interacts with Hsp83.

The protein localises to the cytoplasm. The protein resides in the nucleus. Its subcellular location is the cytoskeleton. It is found in the spindle. In terms of biological role, regulates centrosome duplication and mitotic spindle dynamics. Also involved in controlling the size of dendritic arbors. May act as co-chaperone for Hsp83. During mitotic spindle assembly, regulates microtubule (MT) dynamics by binding to MTs and promoting MT polymerisation. Promotes the elongation and retraction of terminal branches in response to changes in body size, possibly acting downstream of the TORC2 pathway to enable proportional scaling of dendritic arbors. This Drosophila melanogaster (Fruit fly) protein is Cysteine and histidine-rich domain-containing protein morgana.